A 349-amino-acid polypeptide reads, in one-letter code: ATPase GET3 (349 aa).

26-33 is a binding site for ATP; the sequence is KGGVGKTT. Residue D57 is part of the active site. ATP-binding residues include E240 and N267. Zn(2+)-binding residues include C280 and C283.

The protein belongs to the arsA ATPase family. Homodimer. Component of the Golgi to ER traffic (GET) complex, which is composed of GET1, GET2 and GET3. Within the complex, GET1 and GET2 form a heterotetramer which is stabilized by phosphatidylinositol binding and which binds to the GET3 homodimer. Interacts with the chloride channel protein GEF1.

It is found in the cytoplasm. The protein localises to the endoplasmic reticulum. Its subcellular location is the golgi apparatus. Its function is as follows. ATPase required for the post-translational delivery of tail-anchored (TA) proteins to the endoplasmic reticulum. Recognizes and selectively binds the transmembrane domain of TA proteins in the cytosol. This complex then targets to the endoplasmic reticulum by membrane-bound receptors GET1 and GET2, where the tail-anchored protein is released for insertion. This process is regulated by ATP binding and hydrolysis. ATP binding drives the homodimer towards the closed dimer state, facilitating recognition of newly synthesized TA membrane proteins. ATP hydrolysis is required for insertion. Subsequently, the homodimer reverts towards the open dimer state, lowering its affinity for the GET1-GET2 receptor, and returning it to the cytosol to initiate a new round of targeting. Cooperates with the HDEL receptor ERD2 to mediate the ATP-dependent retrieval of resident ER proteins that contain a C-terminal H-D-E-L retention signal from the Golgi to the ER. Involved in low-level resistance to the oxyanions arsenite and arsenate, and in heat tolerance. The polypeptide is ATPase GET3 (Kluyveromyces lactis (strain ATCC 8585 / CBS 2359 / DSM 70799 / NBRC 1267 / NRRL Y-1140 / WM37) (Yeast)).